Here is a 457-residue protein sequence, read N- to C-terminus: MALWGGRFTQAADQRFKQFNDSLRFDYRLAEQDIVGSVAWSKALVTVGVLTAEEQAQLEEALNVLLEDVRARPQQILESDAEDIHSWVEGKLIDKVGQLGKKLHTGRSRNDQVATDLKLWCKDTVSELLTANRQLQSALVETAQNNQDAVMPGYTHLQRAQPVTFAHWCLAYVEMLARDESRLQDALKRLDVSPLGCGALAGTAYEIDREQLAGWLGFASATRNSLDSVSDRDHVLELLSAAAIGMVHLSRFAEDLIFFNTGEAGFVELSDRVTSGSSLMPQKKNPDALELIRGKCGRVQGALTGMMMTLKGLPLAYNKDMQEDKEGLFDALDTWLDCLHMAALVLDGIQVKRPRCQEAAQQGYANATELADYLVAKGVPFREAHHIVGEAVVEAIRQGKPLEELPLTELQKFSPVIGEDVYPILSLQSCLDKRAAKGGVSPQQVAQAIAFARARLG.

The protein belongs to the lyase 1 family. Argininosuccinate lyase subfamily.

Its subcellular location is the cytoplasm. The catalysed reaction is 2-(N(omega)-L-arginino)succinate = fumarate + L-arginine. Its pathway is amino-acid biosynthesis; L-arginine biosynthesis; L-arginine from L-ornithine and carbamoyl phosphate: step 3/3. The polypeptide is Argininosuccinate lyase (Escherichia coli O157:H7 (strain EC4115 / EHEC)).